We begin with the raw amino-acid sequence, 284 residues long: NAD kinase (284 aa).

Asp61 functions as the Proton acceptor in the catalytic mechanism. NAD(+) is bound by residues 61–62 (DG), Arg66, 136–137 (ND), Arg147, Lys164, Asp166, and Leu201.

The protein belongs to the NAD kinase family. A divalent metal cation is required as a cofactor.

It localises to the cytoplasm. The catalysed reaction is NAD(+) + ATP = ADP + NADP(+) + H(+). In terms of biological role, involved in the regulation of the intracellular balance of NAD and NADP, and is a key enzyme in the biosynthesis of NADP. Catalyzes specifically the phosphorylation on 2'-hydroxyl of the adenosine moiety of NAD to yield NADP. The chain is NAD kinase from Dehalococcoides mccartyi (strain ATCC BAA-2100 / JCM 16839 / KCTC 5957 / BAV1).